A 598-amino-acid polypeptide reads, in one-letter code: Phospholipase B-like protein G (598 aa).

The signal sequence occupies residues 1–24 (MIKSYYLFFIILIFLIFINNFILC). N-linked (GlcNAc...) asparagine glycans are attached at residues asparagine 50, asparagine 98, asparagine 173, asparagine 341, asparagine 368, asparagine 450, asparagine 480, asparagine 526, and asparagine 576.

This sequence belongs to the phospholipase B-like family.

It localises to the secreted. Functionally, probable phospholipase. In Dictyostelium discoideum (Social amoeba), this protein is Phospholipase B-like protein G (plbG).